The chain runs to 229 residues: DNA repair protein RecO (229 aa).

Belongs to the RecO family.

Involved in DNA repair and RecF pathway recombination. In Legionella pneumophila (strain Lens), this protein is DNA repair protein RecO.